A 311-amino-acid chain; its full sequence is Bifunctional protein FolD (311 aa).

An NADP(+)-binding site is contributed by 174–176 (GKG).

It belongs to the tetrahydrofolate dehydrogenase/cyclohydrolase family. In terms of assembly, homodimer.

It carries out the reaction (6R)-5,10-methylene-5,6,7,8-tetrahydrofolate + NADP(+) = (6R)-5,10-methenyltetrahydrofolate + NADPH. It catalyses the reaction (6R)-5,10-methenyltetrahydrofolate + H2O = (6R)-10-formyltetrahydrofolate + H(+). It participates in one-carbon metabolism; tetrahydrofolate interconversion. Catalyzes the oxidation of 5,10-methylenetetrahydrofolate to 5,10-methenyltetrahydrofolate and then the hydrolysis of 5,10-methenyltetrahydrofolate to 10-formyltetrahydrofolate. This Pyrobaculum arsenaticum (strain DSM 13514 / JCM 11321 / PZ6) protein is Bifunctional protein FolD.